The primary structure comprises 207 residues: Transcriptional regulatory protein RcsA (207 aa).

Residues 131–196 (LTLPTLSLSK…VIYHIVRLTE (66 aa)) enclose the HTH luxR-type domain. Positions 155–174 (TSQISTQMNIKAKTVSSHKG) form a DNA-binding region, H-T-H motif.

Belongs to the RcsA family.

Its function is as follows. Component of the Rcs signaling system, which controls transcription of numerous genes. Binds to DNA to regulate expression of genes. The polypeptide is Transcriptional regulatory protein RcsA (Klebsiella aerogenes (Enterobacter aerogenes)).